We begin with the raw amino-acid sequence, 524 residues long: Lysine--tRNA ligase (524 aa).

The 'HIGH' region signature appears at 39 to 47 (ASGIPHMGS). The 'KMSKS' region signature appears at 294–298 (KISKS). An ATP-binding site is contributed by K297.

The protein belongs to the class-I aminoacyl-tRNA synthetase family.

The protein resides in the cytoplasm. The catalysed reaction is tRNA(Lys) + L-lysine + ATP = L-lysyl-tRNA(Lys) + AMP + diphosphate. This chain is Lysine--tRNA ligase (lysS), found in Cenarchaeum symbiosum.